Here is a 687-residue protein sequence, read N- to C-terminus: MIRQSTLKNFAIKRCFQHIAYRNTPAMRSVALAQRFYSSSSRYYSASPLPASKRPEPAPSFNVDPLEQPAEPSKLAKKLRAEPDMDTSFVGLTGGQIFNEMMSRQNVDTVFGYPGGAILPVYDAIHNSDKFNFVLPKHEQGAGHMAEGYARASGKPGVVLVTSGPGATNVVTPMADAFADGIPMVVFTGQVPTSAIGTDAFQEADVVGISRSCTKWNVMVKSVEELPLRINEAFEIATSGRPGPVLVDLPKDVTAAILRNPIPTKTTLPSNALNQLTSRAQDEFVMQSINKAADLINLAKKPVLYVGAGILNHADGPRLLKELSDRAQIPVTTTLQGLGSFDQEDPKSLDMLGMHGCATANLAVQNADLIIAVGARFDDRVTGNISKFAPEARRAAAEGRGGIIHFEVSPKNINKVVQTQIAVEGDATTNLGKMMSKIFPVKERSEWFAQINKWKKEYPYAYMEETPGSKIKPQTVIKKLSKVANDTGRHVIVTTGVGQHQMWAAQHWTWRNPHTFITSGGLGTMGYGLPAAIGAQVAKPESLVIDIDGDASFNMTLTELSSAVQAGTPVKILILNNEEQGMVTQWQSLFYEHRYSHTHQLNPDFIKLAEAMGLKGLRVKKQEELDAKLKEFVSTKGPVLLEVEVDKKVPVLPMVAGGSGLDEFINFDPEVERQQTELRHKRTGGKH.

The transit peptide at 1-90 (MIRQSTLKNF…AEPDMDTSFV (90 aa)) directs the protein to the mitochondrion. A compositionally biased stretch (low complexity) spans 43-52 (YYSASPLPAS). A disordered region spans residues 43-68 (YYSASPLPASKRPEPAPSFNVDPLEQ). Glu139 lines the thiamine diphosphate pocket. Residues Arg241, 355 to 376 (HGCATANLAVQNADLIIAVGAR), and 407 to 426 (EVSPKNINKVVQTQIAVEGD) contribute to the FAD site. The thiamine pyrophosphate binding stretch occupies residues 499–579 (QHQMWAAQHW…VKILILNNEE (81 aa)). Residues Asp550, Asn577, and Glu579 each coordinate Mg(2+).

It belongs to the TPP enzyme family. Homodimer. The acetolactate synthase complex contains the catalytic subunit ILV2 and the regulatory small subunit ILV6. It depends on Mg(2+) as a cofactor. Requires thiamine diphosphate as cofactor.

Its subcellular location is the mitochondrion. The catalysed reaction is 2 pyruvate + H(+) = (2S)-2-acetolactate + CO2. The enzyme catalyses 2-oxobutanoate + pyruvate + H(+) = (S)-2-ethyl-2-hydroxy-3-oxobutanoate + CO2. The protein operates within amino-acid biosynthesis; L-isoleucine biosynthesis; L-isoleucine from 2-oxobutanoate: step 1/4. It participates in amino-acid biosynthesis; L-valine biosynthesis; L-valine from pyruvate: step 1/4. Its activity is regulated as follows. The regulatory subunit ILV6 stimulates enzymatic activity seven- to tenfold and confers sensitivity to inhibition by valine and activation by ATP. Its function is as follows. Catalytic subunit of mitochondrial acetolactate synthase, which catalyzes the first of a series of common steps in the biosynthesis of the branched-chain amino acids. Catalyzes the irreversible decarboxylation of pyruvate to a bound hydroxyethyl group that then condenses with either a second pyruvate molecule to form 2-acetolactate (AL) or with 2-ketobutyrate to form 2-aceto-2-hydroxybutyrate (AHB). The first product is the precursor for valine and leucine biosynthesis, while the second leads to isoleucine. This Saccharomyces cerevisiae (strain ATCC 204508 / S288c) (Baker's yeast) protein is Acetolactate synthase catalytic subunit, mitochondrial (ILV2).